The primary structure comprises 343 residues: N-acetyl-gamma-glutamyl-phosphate reductase (343 aa).

The active site involves cysteine 149.

Belongs to the NAGSA dehydrogenase family. Type 1 subfamily.

It localises to the cytoplasm. The enzyme catalyses N-acetyl-L-glutamate 5-semialdehyde + phosphate + NADP(+) = N-acetyl-L-glutamyl 5-phosphate + NADPH + H(+). Its pathway is amino-acid biosynthesis; L-arginine biosynthesis; N(2)-acetyl-L-ornithine from L-glutamate: step 3/4. Functionally, catalyzes the NADPH-dependent reduction of N-acetyl-5-glutamyl phosphate to yield N-acetyl-L-glutamate 5-semialdehyde. The chain is N-acetyl-gamma-glutamyl-phosphate reductase from Alkalilimnicola ehrlichii (strain ATCC BAA-1101 / DSM 17681 / MLHE-1).